A 469-amino-acid chain; its full sequence is UDP-N-acetylmuramate--L-alanine ligase (469 aa).

Residue 113–119 coordinates ATP; that stretch reads GTHGKTT.

It belongs to the MurCDEF family.

Its subcellular location is the cytoplasm. The catalysed reaction is UDP-N-acetyl-alpha-D-muramate + L-alanine + ATP = UDP-N-acetyl-alpha-D-muramoyl-L-alanine + ADP + phosphate + H(+). It functions in the pathway cell wall biogenesis; peptidoglycan biosynthesis. Functionally, cell wall formation. In Neisseria meningitidis serogroup B (strain ATCC BAA-335 / MC58), this protein is UDP-N-acetylmuramate--L-alanine ligase.